The sequence spans 955 residues: UPF0182 protein tll1193 (955 aa).

Helical transmembrane passes span 6-26 (VVPL…AIAL), 53-73 (WSVQ…FYGC), 98-118 (GLGL…LIVA), 163-183 (WLLG…VGLF), 186-206 (LGIL…PVVL), 240-260 (LWLV…YLLA), 280-300 (LQGL…LERY), 324-344 (LYGW…WSAI), and 354-374 (GPIA…ILIV).

The protein belongs to the UPF0182 family.

It localises to the cell membrane. The polypeptide is UPF0182 protein tll1193 (Thermosynechococcus vestitus (strain NIES-2133 / IAM M-273 / BP-1)).